The chain runs to 170 residues: Peptide deformylase (170 aa).

Cysteine 91 and histidine 133 together coordinate Fe cation. The active site involves glutamate 134. Histidine 137 contributes to the Fe cation binding site.

This sequence belongs to the polypeptide deformylase family. Fe(2+) is required as a cofactor.

It carries out the reaction N-terminal N-formyl-L-methionyl-[peptide] + H2O = N-terminal L-methionyl-[peptide] + formate. In terms of biological role, removes the formyl group from the N-terminal Met of newly synthesized proteins. Requires at least a dipeptide for an efficient rate of reaction. N-terminal L-methionine is a prerequisite for activity but the enzyme has broad specificity at other positions. This is Peptide deformylase from Pectobacterium carotovorum subsp. carotovorum (strain PC1).